The following is a 243-amino-acid chain: MSDDASTPAAERIPNKGKLAKDLNEVIRYTLWSVFKLKDTLPEDRAGYADEVQELFDQLAAKDVTIRGTYDLSGLRADADLMIWWHAETADQLQEAYNLFRRTKLGRALEPVWSNMALHRPAEFNRSHIPAFLADETPRNYISVYPFVRSYDWYLLPDEDRRRMLADHGKMARGYPDVRANTVASFSLGDYEWILAFEADELHRIVDLMRHLRGSEARRHVREEIPFYTGRRKDIGELVAGLA.

Tyr145 is an active-site residue. His168 serves as a coordination point for Fe-coproporphyrin III.

The protein belongs to the ChdC family. Type 2 subfamily. Fe-coproporphyrin III is required as a cofactor.

The catalysed reaction is Fe-coproporphyrin III + 2 H2O2 + 2 H(+) = heme b + 2 CO2 + 4 H2O. It carries out the reaction Fe-coproporphyrin III + H2O2 + H(+) = harderoheme III + CO2 + 2 H2O. It catalyses the reaction harderoheme III + H2O2 + H(+) = heme b + CO2 + 2 H2O. The protein operates within porphyrin-containing compound metabolism; protoheme biosynthesis. Involved in coproporphyrin-dependent heme b biosynthesis. Catalyzes the decarboxylation of Fe-coproporphyrin III (coproheme) to heme b (protoheme IX), the last step of the pathway. The reaction occurs in a stepwise manner with a three-propionate intermediate. The chain is Coproheme decarboxylase from Streptomyces coelicolor (strain ATCC BAA-471 / A3(2) / M145).